The following is a 312-amino-acid chain: Malate dehydrogenase (312 aa).

NAD(+)-binding positions include Gly7–Gly13 and Asp34. Substrate is bound by residues Arg81 and Arg87. NAD(+) is bound by residues Asn94 and Ile117–Asn119. Asn119 and Arg153 together coordinate substrate. His177 acts as the Proton acceptor in catalysis. Met227 serves as a coordination point for NAD(+).

This sequence belongs to the LDH/MDH superfamily. MDH type 1 family. In terms of assembly, homodimer.

It catalyses the reaction (S)-malate + NAD(+) = oxaloacetate + NADH + H(+). Catalyzes the reversible oxidation of malate to oxaloacetate. The chain is Malate dehydrogenase from Edwardsiella ictaluri (strain 93-146).